The sequence spans 512 residues: tRNA-2-methylthio-N(6)-dimethylallyladenosine synthase (512 aa).

Residues methionine 1 to alanine 22 form a disordered region. The MTTase N-terminal domain occupies arginine 25–histidine 141. 6 residues coordinate [4Fe-4S] cluster: cysteine 34, cysteine 70, cysteine 104, cysteine 178, cysteine 182, and cysteine 185. In terms of domain architecture, Radical SAM core spans arginine 164–glutamate 400. Positions arginine 403–valine 471 constitute a TRAM domain.

It belongs to the methylthiotransferase family. MiaB subfamily. As to quaternary structure, monomer. [4Fe-4S] cluster is required as a cofactor.

The protein localises to the cytoplasm. It carries out the reaction N(6)-dimethylallyladenosine(37) in tRNA + (sulfur carrier)-SH + AH2 + 2 S-adenosyl-L-methionine = 2-methylsulfanyl-N(6)-dimethylallyladenosine(37) in tRNA + (sulfur carrier)-H + 5'-deoxyadenosine + L-methionine + A + S-adenosyl-L-homocysteine + 2 H(+). Its function is as follows. Catalyzes the methylthiolation of N6-(dimethylallyl)adenosine (i(6)A), leading to the formation of 2-methylthio-N6-(dimethylallyl)adenosine (ms(2)i(6)A) at position 37 in tRNAs that read codons beginning with uridine. This chain is tRNA-2-methylthio-N(6)-dimethylallyladenosine synthase, found in Mycobacterium bovis (strain ATCC BAA-935 / AF2122/97).